We begin with the raw amino-acid sequence, 286 residues long: ATP synthase gamma chain (286 aa).

It belongs to the ATPase gamma chain family. As to quaternary structure, F-type ATPases have 2 components, CF(1) - the catalytic core - and CF(0) - the membrane proton channel. CF(1) has five subunits: alpha(3), beta(3), gamma(1), delta(1), epsilon(1). CF(0) has three main subunits: a, b and c.

It localises to the cell inner membrane. In terms of biological role, produces ATP from ADP in the presence of a proton gradient across the membrane. The gamma chain is believed to be important in regulating ATPase activity and the flow of protons through the CF(0) complex. The polypeptide is ATP synthase gamma chain (Pseudomonas aeruginosa (strain UCBPP-PA14)).